A 288-amino-acid polypeptide reads, in one-letter code: uncharacterized protein (288 aa).

This sequence to M.bovis Mb1522c, M.leprae ML1804 and M.avium MAV321.

This is an uncharacterized protein from Mycobacterium tuberculosis (strain CDC 1551 / Oshkosh).